Consider the following 522-residue polypeptide: Lysine--tRNA ligase (522 aa).

A 'HIGH' region motif is present at residues 44-52; the sequence is PSGLPHIGT. The short motif at 290–294 is the 'KMSKS' region element; that stretch reads KISKS. ATP is bound at residue lysine 293.

It belongs to the class-I aminoacyl-tRNA synthetase family.

It is found in the cytoplasm. The enzyme catalyses tRNA(Lys) + L-lysine + ATP = L-lysyl-tRNA(Lys) + AMP + diphosphate. The chain is Lysine--tRNA ligase from Rickettsia conorii (strain ATCC VR-613 / Malish 7).